Consider the following 1106-residue polypeptide: Carbamoyl phosphate synthase large chain (1106 aa).

Residues 1–401 (MPKRNDLNKV…AFLKALRSLE (401 aa)) are carboxyphosphate synthetic domain. 12 residues coordinate ATP: arginine 129, arginine 169, glycine 175, glycine 176, arginine 208, valine 210, glutamate 215, glycine 241, valine 242, histidine 243, glutamine 284, and glutamate 298. One can recognise an ATP-grasp 1 domain in the interval 133 to 327 (KTTMNDIGEP…IARVASKIAI (195 aa)). Mg(2+) is bound by residues glutamine 284, glutamate 298, and asparagine 300. 3 residues coordinate Mn(2+): glutamine 284, glutamate 298, and asparagine 300. The interval 402 to 577 (IDLDDLHQSI…YSAYNEENEA (176 aa)) is oligomerization domain. The carbamoyl phosphate synthetic domain stretch occupies residues 578 to 964 (IPPSEPTHDK…ALYKAMLASG (387 aa)). In terms of domain architecture, ATP-grasp 2 spans 706-896 (DQLLNKLGID…MVKIATKAMM (191 aa)). 10 residues coordinate ATP: arginine 742, glutamine 781, leucine 783, glutamate 787, glycine 812, valine 813, histidine 814, serine 815, glutamine 855, and glutamate 867. Glutamine 855, glutamate 867, and asparagine 869 together coordinate Mg(2+). Residues glutamine 855, glutamate 867, and asparagine 869 each contribute to the Mn(2+) site. One can recognise an MGS-like domain in the interval 965-1106 (FSINLNGGVL…LQDYLKELSN (142 aa)). The segment at 965–1106 (FSINLNGGVL…LQDYLKELSN (142 aa)) is allosteric domain.

The protein belongs to the CarB family. As to quaternary structure, composed of two chains; the small (or glutamine) chain promotes the hydrolysis of glutamine to ammonia, which is used by the large (or ammonia) chain to synthesize carbamoyl phosphate. Tetramer of heterodimers (alpha,beta)4. Requires Mg(2+) as cofactor. It depends on Mn(2+) as a cofactor.

It carries out the reaction hydrogencarbonate + L-glutamine + 2 ATP + H2O = carbamoyl phosphate + L-glutamate + 2 ADP + phosphate + 2 H(+). It catalyses the reaction hydrogencarbonate + NH4(+) + 2 ATP = carbamoyl phosphate + 2 ADP + phosphate + 2 H(+). It participates in amino-acid biosynthesis; L-arginine biosynthesis; carbamoyl phosphate from bicarbonate: step 1/1. Its pathway is pyrimidine metabolism; UMP biosynthesis via de novo pathway; (S)-dihydroorotate from bicarbonate: step 1/3. Its function is as follows. Large subunit of the glutamine-dependent carbamoyl phosphate synthetase (CPSase). CPSase catalyzes the formation of carbamoyl phosphate from the ammonia moiety of glutamine, carbonate, and phosphate donated by ATP, constituting the first step of 2 biosynthetic pathways, one leading to arginine and/or urea and the other to pyrimidine nucleotides. The large subunit (synthetase) binds the substrates ammonia (free or transferred from glutamine from the small subunit), hydrogencarbonate and ATP and carries out an ATP-coupled ligase reaction, activating hydrogencarbonate by forming carboxy phosphate which reacts with ammonia to form carbamoyl phosphate. This is Carbamoyl phosphate synthase large chain from Natranaerobius thermophilus (strain ATCC BAA-1301 / DSM 18059 / JW/NM-WN-LF).